The following is a 472-amino-acid chain: 2-methylcitrate synthase, mitochondrial (472 aa).

A mitochondrion-targeting transit peptide spans M1–Y29. CoA-binding residues include R75 and K193. H271 is a binding site for oxaloacetate. CoA is bound at residue L306. H307 is a catalytic residue. V348, G350, and Y351 together coordinate CoA. Residues H353 and R362 each contribute to the oxaloacetate site. Residue H353 is part of the active site. CoA-binding residues include T402, K403, and N408. The active site involves D410. Positions 436 and 456 each coordinate oxaloacetate.

The protein belongs to the citrate synthase family. As to quaternary structure, homodimer.

It is found in the mitochondrion matrix. The catalysed reaction is propanoyl-CoA + oxaloacetate + H2O = (2S,3S)-2-methylcitrate + CoA + H(+). The enzyme catalyses oxaloacetate + acetyl-CoA + H2O = citrate + CoA + H(+). It participates in organic acid metabolism; propanoate degradation. In terms of biological role, component of the methylcitrate cycle that catalyzes the synthesis of (2S,3S)-2-methylcitrate from propionyl-CoA and oxaloacetate. Plays an important role in detoxification of propionyl-CoA, an inhibitor of both primary and secondary metabolism. Also has citrate synthase activity using as substrates acetyl-CoA and oxaloacetate. The chain is 2-methylcitrate synthase, mitochondrial from Gibberella moniliformis (Maize ear and stalk rot fungus).